A 467-amino-acid polypeptide reads, in one-letter code: Methylenetetrahydrofolate--tRNA-(uracil-5-)-methyltransferase TrmFO (467 aa).

11–16 (GAGLAG) contributes to the FAD binding site.

Belongs to the MnmG family. TrmFO subfamily. Requires FAD as cofactor.

The protein localises to the cytoplasm. It carries out the reaction uridine(54) in tRNA + (6R)-5,10-methylene-5,6,7,8-tetrahydrofolate + NADH + H(+) = 5-methyluridine(54) in tRNA + (6S)-5,6,7,8-tetrahydrofolate + NAD(+). The enzyme catalyses uridine(54) in tRNA + (6R)-5,10-methylene-5,6,7,8-tetrahydrofolate + NADPH + H(+) = 5-methyluridine(54) in tRNA + (6S)-5,6,7,8-tetrahydrofolate + NADP(+). Its function is as follows. Catalyzes the folate-dependent formation of 5-methyl-uridine at position 54 (M-5-U54) in all tRNAs. This is Methylenetetrahydrofolate--tRNA-(uracil-5-)-methyltransferase TrmFO from Prochlorococcus marinus (strain NATL1A).